Consider the following 509-residue polypeptide: NADH-quinone oxidoreductase subunit M (509 aa).

13 helical membrane passes run 1 to 21, 30 to 50, 87 to 107, 123 to 143, 176 to 196, 223 to 243, 261 to 281, 288 to 308, 316 to 336, 342 to 362, 376 to 396, 422 to 442, and 467 to 487; these read MILP…WIAE, WIAL…WATG, LSLL…LCSW, WILG…FFFF, FFIF…GLVF, WLLM…VPVH, LAGI…LPLF, FAPI…LLSF, LVAY…YSGS, GVVV…ILCG, MGGL…FASA, VIIV…LIMI, and VLGL…VLDI.

Belongs to the complex I subunit 4 family. In terms of assembly, composed of 13 different subunits. Subunits NuoA, H, J, K, L, M, N constitute the membrane sector of the complex.

It localises to the cell inner membrane. It carries out the reaction a quinone + NADH + 5 H(+)(in) = a quinol + NAD(+) + 4 H(+)(out). In terms of biological role, NDH-1 shuttles electrons from NADH, via FMN and iron-sulfur (Fe-S) centers, to quinones in the respiratory chain. The immediate electron acceptor for the enzyme in this species is believed to be ubiquinone. Couples the redox reaction to proton translocation (for every two electrons transferred, four hydrogen ions are translocated across the cytoplasmic membrane), and thus conserves the redox energy in a proton gradient. The sequence is that of NADH-quinone oxidoreductase subunit M (nuoM) from Pseudomonas aeruginosa (strain ATCC 15692 / DSM 22644 / CIP 104116 / JCM 14847 / LMG 12228 / 1C / PRS 101 / PAO1).